The sequence spans 263 residues: Aminoglycoside (3'') (9) adenylyltransferase (263 aa).

The catalysed reaction is streptomycin + ATP = 3''-O-adenylylstreptomycin + diphosphate. It catalyses the reaction spectinomycin + ATP = 9-O-adenylylspectinomycin + diphosphate. In terms of biological role, mediates bacterial resistance to the antibiotics streptomycin and spectinomycin. This Escherichia coli protein is Aminoglycoside (3'') (9) adenylyltransferase.